Consider the following 526-residue polypeptide: Ferrochelatase-2, chloroplastic (526 aa).

This sequence belongs to the ferrochelatase family.

It is found in the plastid. The protein localises to the chloroplast. It carries out the reaction heme b + 2 H(+) = protoporphyrin IX + Fe(2+). The protein operates within porphyrin-containing compound metabolism; protoheme biosynthesis; protoheme from protoporphyrin-IX: step 1/1. Catalyzes the ferrous insertion into protoporphyrin IX. This chain is Ferrochelatase-2, chloroplastic, found in Oryza sativa subsp. japonica (Rice).